The chain runs to 416 residues: Histidine--tRNA ligase (416 aa).

Belongs to the class-II aminoacyl-tRNA synthetase family. In terms of assembly, homodimer.

The protein localises to the cytoplasm. It carries out the reaction tRNA(His) + L-histidine + ATP = L-histidyl-tRNA(His) + AMP + diphosphate + H(+). This chain is Histidine--tRNA ligase, found in Clostridium kluyveri (strain NBRC 12016).